Here is a 472-residue protein sequence, read N- to C-terminus: Glutamine synthetase (472 aa).

The 85-residue stretch at Asn-17–Thr-101 folds into the GS beta-grasp domain. Residues Pro-109–Ala-472 enclose the GS catalytic domain. Mg(2+)-binding residues include Glu-134 and Glu-136. Glu-212 provides a ligand contact to ATP. Positions 217 and 225 each coordinate Mg(2+). L-glutamate is bound by residues Asn-269 to Gly-270 and Gly-270. His-274 serves as a coordination point for Mg(2+). Residues Asn-276–Ser-278 and Ser-278 each bind ATP. L-glutamate is bound by residues Arg-326, Glu-332, and Arg-344. The ATP site is built by Arg-344, Arg-349, and Lys-357. Glu-362 lines the Mg(2+) pocket. Arg-364 contacts L-glutamate. O-AMP-tyrosine is present on Tyr-402.

The protein belongs to the glutamine synthetase family. In terms of assembly, oligomer of 12 subunits arranged in the form of two hexameric ring. Requires Mg(2+) as cofactor.

The protein localises to the cytoplasm. It carries out the reaction L-glutamate + NH4(+) + ATP = L-glutamine + ADP + phosphate + H(+). The activity of this enzyme could be controlled by adenylation under conditions of abundant glutamine. Its function is as follows. Catalyzes the ATP-dependent biosynthesis of glutamine from glutamate and ammonia. This Haemophilus influenzae (strain ATCC 51907 / DSM 11121 / KW20 / Rd) protein is Glutamine synthetase.